A 237-amino-acid polypeptide reads, in one-letter code: Leucyl/phenylalanyl-tRNA--protein transferase (237 aa).

This sequence belongs to the L/F-transferase family.

It localises to the cytoplasm. The catalysed reaction is N-terminal L-lysyl-[protein] + L-leucyl-tRNA(Leu) = N-terminal L-leucyl-L-lysyl-[protein] + tRNA(Leu) + H(+). The enzyme catalyses N-terminal L-arginyl-[protein] + L-leucyl-tRNA(Leu) = N-terminal L-leucyl-L-arginyl-[protein] + tRNA(Leu) + H(+). It catalyses the reaction L-phenylalanyl-tRNA(Phe) + an N-terminal L-alpha-aminoacyl-[protein] = an N-terminal L-phenylalanyl-L-alpha-aminoacyl-[protein] + tRNA(Phe). Functions in the N-end rule pathway of protein degradation where it conjugates Leu, Phe and, less efficiently, Met from aminoacyl-tRNAs to the N-termini of proteins containing an N-terminal arginine or lysine. The chain is Leucyl/phenylalanyl-tRNA--protein transferase from Shewanella baltica (strain OS223).